Consider the following 698-residue polypeptide: UV radiation resistance-associated protein (698 aa).

Low complexity predominate over residues 1–10 (MSSCASLGGP). The segment at 1–21 (MSSCASLGGPVPLPPPGPSAA) is disordered. Positions 23–149 (TSGAPARALH…YLGQQIHARN (127 aa)) constitute a C2 domain. The tract at residues 199-268 (HRAQCAIKQT…REVAFLHKQQ (70 aa)) is sufficient for interaction with STX7; VTI1B AND STX8. Residues 200 to 304 (RAQCAIKQTQ…LRKECTAKRE (105 aa)) are a coiled coil. A sufficient for interaction with VPS16, required for interaction with CEP63 region spans residues 269–441 (MALQDKGSAF…IAQLRYQHGL (173 aa)). Positions 442-698 (GTPDLRQTLP…FRRPRRSSDK (257 aa)) are required for interaction with PRKDC, XRCC6 and XRCC5. Disordered stretches follow at residues 477–551 (PKRQ…SSLD) and 565–586 (VDLG…EQGE). Residue Ser-492 is modified to Phosphoserine. Ser-497 bears the Phosphoserine; by MTOR mark. Position 507 is a phosphoserine (Ser-507). Residue Thr-517 is modified to Phosphothreonine. A phosphoserine mark is found at Ser-521, Ser-548, Ser-549, Ser-570, and Ser-688.

Component of the PI3K (PI3KC3/PI3K-III/class III phosphatidylinositol 3-kinase) complex II (PI3KC3-C2) in which the core composed of the catalytic subunit PIK3C3, the regulatory subunit PIK3R4 and BECN1 is associated with UVRAG; in the complex interacts directly with BECN1. PI3KC3-C2 can associate with further regulatory subunits such as RUBCN and probably SH3GLB1/Bif-1. Interacts with SH3GLB1; UVRAG bridges the interaction to BECN1 indicative for an association with the PI3K complex PI3KC3-C2. Interacts with RINT1. Associates with the NRZ complex under basal conditions and dissociates from it under autophagy conditions to associate with the PI3K complex; these complex associations seem to be mutually exclusive. Interacts with VPS16; VPS11; VPS18; VPS33 (VPS33A or VPS33B) and VPS39; indicative for an association with a class C Vps tethering complex (possibly the HOPS complex). Interacts with RAB7A; RAB7A competes with UVRAG for RUBCN binding. Interacts with STX7, VTI1B, STX8. Interacts with PRKDC, XRCC6 and XRCC5; indicative for an association with the DNA-dependent protein kinase complex DNA-PK. Interacts with CEP63. Directly interacts with FEZ1 and SCOC; the interaction with SCOC is reduced by amino acid starvation, but the complex is stabilized in the presence of FEZ1. Interacts with BECN1P1/BECN2. Interacts with SLAMF1. Interacts with RUBCNL/PACER; promoting targeting of UVRAG to autophagosome. Interacts with WNK1. In terms of processing, phosphorylated at Ser-497 by MTOR under basal conditions; increases the interaction with RUBCN implicated in inhibitory effect of RUBCN on PI3KC3 and decreases interaction with RAB7A, and VPS16 and VPS39 (indicative for a class C Vps complex, possibly the HOPS complex).

The protein resides in the late endosome. It localises to the lysosome. It is found in the cytoplasmic vesicle. The protein localises to the autophagosome. Its subcellular location is the early endosome. The protein resides in the endoplasmic reticulum. It localises to the midbody. It is found in the chromosome. The protein localises to the centromere. Versatile protein that is involved in regulation of different cellular pathways implicated in membrane trafficking. Involved in regulation of the COPI-dependent retrograde transport from Golgi and the endoplasmic reticulum by associating with the NRZ complex; the function is dependent on its binding to phosphatidylinositol 3-phosphate (PtdIns(3)P). During autophagy acts as a regulatory subunit of the alternative PI3K complex II (PI3KC3-C2) that mediates formation of phosphatidylinositol 3-phosphate and is believed to be involved in maturation of autophagosomes and endocytosis. Activates lipid kinase activity of PIK3C3. Involved in the regulation of degradative endocytic trafficking and cytokinesis, and in regulation of ATG9A transport from the Golgi to the autophagosome; the functions seems to implicate its association with PI3KC3-C2. Involved in maturation of autophagosomes and degradative endocytic trafficking independently of BECN1 but depending on its association with a class C Vps complex (possibly the HOPS complex); the association is also proposed to promote autophagosome recruitment and activation of Rab7 and endosome-endosome fusion events. Enhances class C Vps complex (possibly HOPS complex) association with a SNARE complex and promotes fusogenic SNARE complex formation during late endocytic membrane fusion. In case of negative-strand RNA virus infection is required for efficient virus entry, promotes endocytic transport of virions and is implicated in a VAMP8-specific fusogenic SNARE complex assembly. Its function is as follows. Involved in maintaining chromosomal stability. Promotes DNA double-strand break (DSB) repair by association with DNA-dependent protein kinase complex DNA-PK and activating it in non-homologous end joining (NHEJ). Required for centrosome stability and proper chromosome segregation. The sequence is that of UV radiation resistance-associated protein (Uvrag) from Mus musculus (Mouse).